The chain runs to 552 residues: Protein FAM234A (552 aa).

Residues 1–48 (MTDGKDLEAEIHPLKSENRKVPENAGALAGKEPRGTPAPQTRLSHCRT) lie on the Cytoplasmic side of the membrane. The helical; Signal-anchor for type II membrane protein transmembrane segment at 49–69 (AAFFLSLFACLLVVFVVSFII) threads the bilayer. Residues 70 to 552 (PCPDRPALQG…LSRLRYRSEA (483 aa)) are Extracellular-facing. Residues asparagine 115, asparagine 238, and asparagine 473 are each glycosylated (N-linked (GlcNAc...) asparagine).

This sequence belongs to the FAM234 family.

It localises to the membrane. The sequence is that of Protein FAM234A (FAM234A) from Bos taurus (Bovine).